Reading from the N-terminus, the 320-residue chain is Ferrochelatase (320 aa).

Residues H194 and E275 each coordinate Fe cation.

Belongs to the ferrochelatase family. As to quaternary structure, monomer.

The protein localises to the cytoplasm. The catalysed reaction is heme b + 2 H(+) = protoporphyrin IX + Fe(2+). It participates in porphyrin-containing compound metabolism; protoheme biosynthesis; protoheme from protoporphyrin-IX: step 1/1. Functionally, catalyzes the ferrous insertion into protoporphyrin IX. The sequence is that of Ferrochelatase from Escherichia coli O45:K1 (strain S88 / ExPEC).